Here is a 282-residue protein sequence, read N- to C-terminus: tRNA uridine(34) hydroxylase (282 aa).

Positions 128-222 constitute a Rhodanese domain; it reads EGRPVVMLDT…YFEEVGGSHY (95 aa). C182 acts as the Cysteine persulfide intermediate in catalysis.

This sequence belongs to the TrhO family.

The enzyme catalyses uridine(34) in tRNA + AH2 + O2 = 5-hydroxyuridine(34) in tRNA + A + H2O. Functionally, catalyzes oxygen-dependent 5-hydroxyuridine (ho5U) modification at position 34 in tRNAs. This chain is tRNA uridine(34) hydroxylase, found in Cupriavidus necator (strain ATCC 17699 / DSM 428 / KCTC 22496 / NCIMB 10442 / H16 / Stanier 337) (Ralstonia eutropha).